Here is a 394-residue protein sequence, read N- to C-terminus: Dual-specificity RNA methyltransferase RlmN (394 aa).

The active-site Proton acceptor is E116. The region spanning E122–D365 is the Radical SAM core domain. An intrachain disulfide couples C129 to C370. Residues C136, C140, and C143 each coordinate [4Fe-4S] cluster. S-adenosyl-L-methionine contacts are provided by residues G196–E197, S228, S250–H252, and N327. C370 functions as the S-methylcysteine intermediate in the catalytic mechanism.

It belongs to the radical SAM superfamily. RlmN family. The cofactor is [4Fe-4S] cluster.

Its subcellular location is the cytoplasm. It carries out the reaction adenosine(2503) in 23S rRNA + 2 reduced [2Fe-2S]-[ferredoxin] + 2 S-adenosyl-L-methionine = 2-methyladenosine(2503) in 23S rRNA + 5'-deoxyadenosine + L-methionine + 2 oxidized [2Fe-2S]-[ferredoxin] + S-adenosyl-L-homocysteine. The catalysed reaction is adenosine(37) in tRNA + 2 reduced [2Fe-2S]-[ferredoxin] + 2 S-adenosyl-L-methionine = 2-methyladenosine(37) in tRNA + 5'-deoxyadenosine + L-methionine + 2 oxidized [2Fe-2S]-[ferredoxin] + S-adenosyl-L-homocysteine. Specifically methylates position 2 of adenine 2503 in 23S rRNA and position 2 of adenine 37 in tRNAs. m2A2503 modification seems to play a crucial role in the proofreading step occurring at the peptidyl transferase center and thus would serve to optimize ribosomal fidelity. The polypeptide is Dual-specificity RNA methyltransferase RlmN (Dinoroseobacter shibae (strain DSM 16493 / NCIMB 14021 / DFL 12)).